The sequence spans 149 residues: Large ribosomal subunit protein bL9 (149 aa).

This sequence belongs to the bacterial ribosomal protein bL9 family.

Functionally, binds to the 23S rRNA. The polypeptide is Large ribosomal subunit protein bL9 (Anaeromyxobacter dehalogenans (strain 2CP-1 / ATCC BAA-258)).